The sequence spans 408 residues: Biphenyl dioxygenase system ferredoxin--NAD(+) reductase component (408 aa).

Residue 4 to 35 participates in FAD binding; that stretch reads TIAIIGAGLAGSTAARALRAQGYEGRIHLLGD. Residue 145–173 participates in NAD(+) binding; sequence SLVIVGGGLIGCEVATTARKLSVHVTILE.

The protein belongs to the bacterial ring-hydroxylating dioxygenase ferredoxin reductase family. As to quaternary structure, this dioxygenase system consists of four proteins: the two subunits of the hydroxylase component (BphA and BphE), a ferredoxin (BphF) and a ferredoxin reductase (BphG). FAD serves as cofactor.

It carries out the reaction 2 reduced [2Fe-2S]-[ferredoxin] + NAD(+) + H(+) = 2 oxidized [2Fe-2S]-[ferredoxin] + NADH. Its pathway is xenobiotic degradation; biphenyl degradation. Its function is as follows. Part of the electron transfer component of biphenyl dioxygenase, transfers electrons from ferredoxin (BphF) to NADH. The polypeptide is Biphenyl dioxygenase system ferredoxin--NAD(+) reductase component (bphG) (Paraburkholderia xenovorans (strain LB400)).